A 274-amino-acid chain; its full sequence is Large ribosomal subunit protein uL2 (274 aa).

Positions 224–256 (VMNPVDHPHGGGEGKTGEGRHPVDPWGNLTKGY) are disordered. Positions 229–246 (DHPHGGGEGKTGEGRHPV) are enriched in basic and acidic residues.

It belongs to the universal ribosomal protein uL2 family. Part of the 50S ribosomal subunit. Forms a bridge to the 30S subunit in the 70S ribosome.

Its function is as follows. One of the primary rRNA binding proteins. Required for association of the 30S and 50S subunits to form the 70S ribosome, for tRNA binding and peptide bond formation. It has been suggested to have peptidyltransferase activity; this is somewhat controversial. Makes several contacts with the 16S rRNA in the 70S ribosome. This Polaromonas naphthalenivorans (strain CJ2) protein is Large ribosomal subunit protein uL2.